A 412-amino-acid polypeptide reads, in one-letter code: Putative membrane protein 337L (412 aa).

Residues Asn171, Asn186, Asn247, and Asn271 are each glycosylated (N-linked (GlcNAc...) asparagine; by host). The chain crosses the membrane as a helical span at residues 387–407; that stretch reads VLITGIAVTGVAVLLFLLLMF.

The protein belongs to the IIV-6 337L family.

The protein resides in the virion membrane. This chain is Putative membrane protein 337L, found in Acheta domesticus (House cricket).